Here is a 23-residue protein sequence, read N- to C-terminus: Apolipophorin-1 (23 aa).

Residues 1–15 (SVKSEVDNFDKHLKA) show a composition bias toward basic and acidic residues. The tract at residues 1-23 (SVKSEVDNFDKHLKAESAPFNNE) is disordered.

As to expression, expressed in hemolymph.

It localises to the secreted. Its function is as follows. Constitutes the major component of lipophorin, which mediates transport for various types of lipids in hemolymph. Acts by forming lipoprotein particles that bind lipoproteins and lipids. The polypeptide is Apolipophorin-1 (Galleria mellonella (Greater wax moth)).